We begin with the raw amino-acid sequence, 645 residues long: Nucleolar GTP-binding protein 1 (645 aa).

An OBG-type G domain is found at 168-340; the sequence is RTLLICGYPN…VRNKACEKLL (173 aa). GTP is bound by residues 174–181, 220–224, and 288–291; these read GYPNVGKS, DTPGI, and NKTD. A disordered region spans residues 567–645; the sequence is GQNDSMASGS…KRGIGKSDFR (79 aa). Basic and acidic residues predominate over residues 612–624; it reads NRDARQGEADRHA.

It belongs to the TRAFAC class OBG-HflX-like GTPase superfamily. OBG GTPase family. NOG subfamily.

The protein resides in the nucleus. The protein localises to the nucleolus. In terms of biological role, involved in the biogenesis of the 60S ribosomal subunit. In Candida glabrata (strain ATCC 2001 / BCRC 20586 / JCM 3761 / NBRC 0622 / NRRL Y-65 / CBS 138) (Yeast), this protein is Nucleolar GTP-binding protein 1 (NOG1).